Reading from the N-terminus, the 251-residue chain is Triosephosphate isomerase (251 aa).

9-11 (NWK) serves as a coordination point for substrate. The active-site Electrophile is histidine 94. The active-site Proton acceptor is the glutamate 166. Substrate contacts are provided by residues glycine 172, serine 211, and 232–233 (GG).

It belongs to the triosephosphate isomerase family. In terms of assembly, homodimer.

It is found in the cytoplasm. The catalysed reaction is D-glyceraldehyde 3-phosphate = dihydroxyacetone phosphate. It functions in the pathway carbohydrate biosynthesis; gluconeogenesis. It participates in carbohydrate degradation; glycolysis; D-glyceraldehyde 3-phosphate from glycerone phosphate: step 1/1. Involved in the gluconeogenesis. Catalyzes stereospecifically the conversion of dihydroxyacetone phosphate (DHAP) to D-glyceraldehyde-3-phosphate (G3P). This chain is Triosephosphate isomerase, found in Stenotrophomonas maltophilia (strain R551-3).